The sequence spans 352 residues: UPF0324 membrane protein blr3189 (352 aa).

11 helical membrane passes run 21-43 (IAAL…LLER), 53-71 (YVEA…RSFW), 88-110 (LLEV…ASGI), 114-136 (ASIA…LLGL), 143-165 (LIAC…IIGA), 175-197 (SFTA…LLQL), 204-226 (ILAG…AGLV), 236-253 (LMRV…SLVA), 265-284 (VGFF…LATL), 294-316 (VVGP…LGLG), and 329-351 (VTAA…VHWF).

The protein belongs to the UPF0324 family.

It localises to the cell membrane. The polypeptide is UPF0324 membrane protein blr3189 (Bradyrhizobium diazoefficiens (strain JCM 10833 / BCRC 13528 / IAM 13628 / NBRC 14792 / USDA 110)).